The following is a 449-amino-acid chain: Elongation factor 1-alpha (449 aa).

The tr-type G domain maps to 5-230 (KVHINIVVIG…DQIQEPKRPS (226 aa)). The segment at 14 to 21 (GHVDSGKS) is G1. 14–21 (GHVDSGKS) is a GTP binding site. Lysine 55 carries the N6,N6-dimethyllysine modification. Residues 70–74 (GITID) form a G2 region. Lysine 79 is subject to N6,N6,N6-trimethyllysine. The interval 91–94 (DAPG) is G3. GTP is bound by residues 91–95 (DAPGH) and 153–156 (NKMD). Residues 153–156 (NKMD) are G4. Lysine 187 bears the N6,N6,N6-trimethyllysine mark. Positions 194–196 (SGF) are G5. The residue at position 261 (lysine 261) is an N6-methyllysine. The residue at position 289 (glutamate 289) is a 5-glutamyl glycerylphosphorylethanolamine. Lysine 306 carries the N6,N6,N6-trimethyllysine modification. A 5-glutamyl glycerylphosphorylethanolamine modification is found at glutamate 362. Lysine 396 is modified (N6,N6,N6-trimethyllysine).

Belongs to the TRAFAC class translation factor GTPase superfamily. Classic translation factor GTPase family. EF-Tu/EF-1A subfamily.

The protein resides in the cytoplasm. In terms of biological role, this protein promotes the GTP-dependent binding of aminoacyl-tRNA to the A-site of ribosomes during protein biosynthesis. This Manihot esculenta (Cassava) protein is Elongation factor 1-alpha (EF1).